Consider the following 840-residue polypeptide: Putative pentatricopeptide repeat-containing protein At1g31840 (840 aa).

PPR repeat units lie at residues 98–128 (KDPS…MITN), 145–179 (DADV…GVVI), 180–214 (PQDS…GIEP), 216–250 (GVSA…GFRV), 251–284 (GIVS…GPAP), 285–319 (NVVT…GIEP), 320–354 (DLIA…GVKL), 355–389 (DVVV…GISP), 390–424 (NVVT…GMEP), 425–459 (SIVT…GYPP), 460–494 (DVVI…SIRL), 495–529 (NVVV…GIKP), 530–564 (DVAT…GLEP), 565–599 (DALA…KISA), 600–634 (DIAV…KMEP), 635–669 (DIVT…PFGP), 670–704 (NTVT…GSKP), 705–739 (NAVT…GISP), 740–774 (SIVS…KLLP), and 775–809 (DVVA…GVKP).

The protein belongs to the PPR family. P subfamily.

The protein is Putative pentatricopeptide repeat-containing protein At1g31840 of Arabidopsis thaliana (Mouse-ear cress).